The following is an 88-amino-acid chain: Secretion system apparatus protein SsaS (88 aa).

Transmembrane regions (helical) follow at residues 15 to 35 (WIVL…GVIV) and 55 to 75 (LLAI…ILLN).

The protein belongs to the FliQ/MopD/SpaQ family.

It localises to the cell membrane. Functionally, part of a type III secretion system. This Salmonella typhimurium (strain LT2 / SGSC1412 / ATCC 700720) protein is Secretion system apparatus protein SsaS (ssaS).